We begin with the raw amino-acid sequence, 1258 residues long: Cohesin subunit SA-1 (1258 aa).

Positions 1–84 are disordered; the sequence is MITSELPVLQ…HPQQNGEGEP (84 aa). Over residues 10–19 the composition is skewed to polar residues; that stretch reads QDSTNETTAH. Ser24 carries the phosphoserine modification. A compositionally biased stretch (basic and acidic residues) spans 53-62; that stretch reads SPGEKSRIEA. One can recognise an SCD domain in the interval 296–381; it reads FVHRYRDAIA…NRFKDRIVSM (86 aa). Ser756, Ser1062, and Ser1065 each carry phosphoserine. 2 disordered regions span residues 1055–1096 and 1129–1148; these read GGED…SLDN and MGDQ…DFLH. The span at 1062–1074 shows a compositional bias: low complexity; that stretch reads SVNSGSSSSKTSS. The span at 1076–1087 shows a compositional bias: basic residues; the sequence is RNKKGRPPLHKK. Phosphoserine is present on Ser1093. Basic and acidic residues predominate over residues 1137-1146; it reads ESEHGSEPDF. A Glycyl lysine isopeptide (Lys-Gly) (interchain with G-Cter in SUMO2) cross-link involves residue Lys1161.

This sequence belongs to the SCC3 family. As to quaternary structure, cohesin complexes are composed of a heterodimer between a SMC1 protein (SMC1A or SMC1B) and SMC3, which are attached via their hinge domain, and RAD21 which link them at their heads, and one STAG protein (STAG1, STAG2 or STAG3). In cohesin complexes, STAG1 is mutually exclusive with STAG2 and STAG3. Interacts directly with RAD21 in cohesin complex. The cohesin complex interacts with the cohesin loading complex subunits NIPBL/Scc2 (via HEAT repeats) and MAU2/Scc4. NIPBL directly contacts all members of the complex, RAD21, SMC1A/B, SMC3 and STAG1. Phosphorylated by PLK1. The large dissociation of cohesin from chromosome arms during prophase is partly due to its phosphorylation.

It localises to the nucleus. Its subcellular location is the chromosome. The protein localises to the centromere. Its function is as follows. Component of cohesin complex, a complex required for the cohesion of sister chromatids after DNA replication. The cohesin complex apparently forms a large proteinaceous ring within which sister chromatids can be trapped. At anaphase, the complex is cleaved and dissociates from chromatin, allowing sister chromatids to segregate. The cohesin complex may also play a role in spindle pole assembly during mitosis. This is Cohesin subunit SA-1 (STAG1) from Homo sapiens (Human).